A 122-amino-acid polypeptide reads, in one-letter code: Large ribosomal subunit protein uL18 (122 aa).

Belongs to the universal ribosomal protein uL18 family. Part of the 50S ribosomal subunit; part of the 5S rRNA/L5/L18/L25 subcomplex. Contacts the 5S and 23S rRNAs.

In terms of biological role, this is one of the proteins that bind and probably mediate the attachment of the 5S RNA into the large ribosomal subunit, where it forms part of the central protuberance. This Acetivibrio thermocellus (strain ATCC 27405 / DSM 1237 / JCM 9322 / NBRC 103400 / NCIMB 10682 / NRRL B-4536 / VPI 7372) (Clostridium thermocellum) protein is Large ribosomal subunit protein uL18.